A 264-amino-acid chain; its full sequence is MRTYLDLLQHVLDHGVDRDDRTGTGTRSVFGYQMRFDLEEGFPVLTTKKLHLRSIIHELLWFLKGDTNIAYLKENGVTIWDEWADENGDLGPVYGYQWRSWPAPDGRHIDQIANLLKMLHTNPQSRRLIVSAWNPALVDEMALPPCHCLFQFYVANGRLSCQLYQRSADIFLGVPFNIASYALLTMMIAQVTGLKPGEFIHTLGDAHIYSNHFEQARLQLTRTPKKLPVMHINPDVKDLFAFRFEDFRLDGYEADPTIKAPIAV.

Arg21 is a dUMP binding site. Position 51 (His51) interacts with (6R)-5,10-methylene-5,6,7,8-tetrahydrofolate. Position 126-127 (126-127 (RR)) interacts with dUMP. Cys146 (nucleophile) is an active-site residue. Residues 166-169 (RSAD), Asn177, and 207-209 (HIY) contribute to the dUMP site. Residue Asp169 coordinates (6R)-5,10-methylene-5,6,7,8-tetrahydrofolate. A (6R)-5,10-methylene-5,6,7,8-tetrahydrofolate-binding site is contributed by Ala263.

This sequence belongs to the thymidylate synthase family. Bacterial-type ThyA subfamily. Homodimer.

It is found in the cytoplasm. It catalyses the reaction dUMP + (6R)-5,10-methylene-5,6,7,8-tetrahydrofolate = 7,8-dihydrofolate + dTMP. It participates in pyrimidine metabolism; dTTP biosynthesis. Catalyzes the reductive methylation of 2'-deoxyuridine-5'-monophosphate (dUMP) to 2'-deoxythymidine-5'-monophosphate (dTMP) while utilizing 5,10-methylenetetrahydrofolate (mTHF) as the methyl donor and reductant in the reaction, yielding dihydrofolate (DHF) as a by-product. This enzymatic reaction provides an intracellular de novo source of dTMP, an essential precursor for DNA biosynthesis. The sequence is that of Thymidylate synthase from Brucella abortus (strain 2308).